The chain runs to 310 residues: Manganese ABC transporter substrate-binding lipoprotein PsaA (310 aa).

A signal peptide spans 1 to 20; the sequence is MKKIASVLALFVALLFGLLA. Cysteine 21 is lipidated: N-palmitoyl cysteine. Cysteine 21 is lipidated: S-diacylglycerol cysteine. The Mn(2+) site is built by histidine 68, histidine 140, glutamate 206, and aspartate 281.

The protein belongs to the bacterial solute-binding protein 9 family. Lipoprotein receptor antigen (Lrai) subfamily.

The protein resides in the cell membrane. Its function is as follows. Part of the ATP-binding cassette (ABC) transport system PsaABC involved in manganese import. Binds manganese with high affinity and specificity and delivers it to the membrane permease for translocation into the cytoplasm. Also acts as an adhesin which is involved on adherence to extracellular matrix. The protein is Manganese ABC transporter substrate-binding lipoprotein PsaA of Streptococcus pneumoniae.